Here is a 348-residue protein sequence, read N- to C-terminus: Putative methylesterase 14, chloroplastic (348 aa).

Disordered stretches follow at residues 1–29 and 60–80; these read MGNK…MNRS and GSMS…SDPF. Residues 1-76 constitute a chloroplast transit peptide; the sequence is MGNKIISMMK…GSTSTRKRTL (76 aa). Phosphoserine is present on Ser77. Ser172 functions as the Acyl-ester intermediate in the catalytic mechanism. Residues Asp299 and His327 each act as charge relay system in the active site.

Belongs to the AB hydrolase superfamily. Methylesterase family.

The protein resides in the plastid. Its subcellular location is the chloroplast. Putative methylesterase. The chain is Putative methylesterase 14, chloroplastic from Arabidopsis thaliana (Mouse-ear cress).